A 61-amino-acid chain; its full sequence is Photosystem II reaction center protein K (61 aa).

Residues 1 to 24 (MLNIFCLICICLNSTLYSSSFFFA) constitute a propeptide that is removed on maturation. Residues 32 to 52 (FFNPIIDVMPIIPVLFFLLAF) form a helical membrane-spanning segment.

The protein belongs to the PsbK family. As to quaternary structure, PSII is composed of 1 copy each of membrane proteins PsbA, PsbB, PsbC, PsbD, PsbE, PsbF, PsbH, PsbI, PsbJ, PsbK, PsbL, PsbM, PsbT, PsbX, PsbY, PsbZ, Psb30/Ycf12, at least 3 peripheral proteins of the oxygen-evolving complex and a large number of cofactors. It forms dimeric complexes.

Its subcellular location is the plastid. It is found in the chloroplast thylakoid membrane. One of the components of the core complex of photosystem II (PSII). PSII is a light-driven water:plastoquinone oxidoreductase that uses light energy to abstract electrons from H(2)O, generating O(2) and a proton gradient subsequently used for ATP formation. It consists of a core antenna complex that captures photons, and an electron transfer chain that converts photonic excitation into a charge separation. The protein is Photosystem II reaction center protein K of Phalaenopsis aphrodite subsp. formosana (Moth orchid).